Consider the following 353-residue polypeptide: UDP-N-acetylglucosamine--N-acetylmuramyl-(pentapeptide) pyrophosphoryl-undecaprenol N-acetylglucosamine transferase (353 aa).

Residues 11-13, arginine 164, serine 194, and glutamine 289 contribute to the UDP-N-acetyl-alpha-D-glucosamine site; that span reads SAG.

This sequence belongs to the glycosyltransferase 28 family. MurG subfamily.

It is found in the cell membrane. The enzyme catalyses di-trans,octa-cis-undecaprenyl diphospho-N-acetyl-alpha-D-muramoyl-L-alanyl-D-glutamyl-meso-2,6-diaminopimeloyl-D-alanyl-D-alanine + UDP-N-acetyl-alpha-D-glucosamine = di-trans,octa-cis-undecaprenyl diphospho-[N-acetyl-alpha-D-glucosaminyl-(1-&gt;4)]-N-acetyl-alpha-D-muramoyl-L-alanyl-D-glutamyl-meso-2,6-diaminopimeloyl-D-alanyl-D-alanine + UDP + H(+). It functions in the pathway cell wall biogenesis; peptidoglycan biosynthesis. In terms of biological role, cell wall formation. Catalyzes the transfer of a GlcNAc subunit on undecaprenyl-pyrophosphoryl-MurNAc-pentapeptide (lipid intermediate I) to form undecaprenyl-pyrophosphoryl-MurNAc-(pentapeptide)GlcNAc (lipid intermediate II). This Clostridium kluyveri (strain ATCC 8527 / DSM 555 / NBRC 12016 / NCIMB 10680 / K1) protein is UDP-N-acetylglucosamine--N-acetylmuramyl-(pentapeptide) pyrophosphoryl-undecaprenol N-acetylglucosamine transferase.